Reading from the N-terminus, the 151-residue chain is Probable cGMP 3',5'-cyclic phosphodiesterase subunit delta (151 aa).

It belongs to the PDE6D/unc-119 family. In terms of assembly, interacts with Pde6.

The protein localises to the nucleus. Its subcellular location is the cytoplasm. This chain is Probable cGMP 3',5'-cyclic phosphodiesterase subunit delta, found in Drosophila erecta (Fruit fly).